Reading from the N-terminus, the 398-residue chain is Succinate--CoA ligase [ADP-forming] subunit beta (398 aa).

One can recognise an ATP-grasp domain in the interval 9-254 (KAVLREFGVP…ETEEDAKEIE (246 aa)). Residues lysine 46, 53-55 (GRG), glutamate 109, serine 112, and glutamate 117 each bind ATP. Residues asparagine 209 and aspartate 223 each contribute to the Mg(2+) site. Substrate is bound by residues asparagine 274 and 331–333 (GIM).

The protein belongs to the succinate/malate CoA ligase beta subunit family. In terms of assembly, heterotetramer of two alpha and two beta subunits. Requires Mg(2+) as cofactor.

The enzyme catalyses succinate + ATP + CoA = succinyl-CoA + ADP + phosphate. The catalysed reaction is GTP + succinate + CoA = succinyl-CoA + GDP + phosphate. It functions in the pathway carbohydrate metabolism; tricarboxylic acid cycle; succinate from succinyl-CoA (ligase route): step 1/1. Functionally, succinyl-CoA synthetase functions in the citric acid cycle (TCA), coupling the hydrolysis of succinyl-CoA to the synthesis of either ATP or GTP and thus represents the only step of substrate-level phosphorylation in the TCA. The beta subunit provides nucleotide specificity of the enzyme and binds the substrate succinate, while the binding sites for coenzyme A and phosphate are found in the alpha subunit. In Rhodopseudomonas palustris (strain ATCC BAA-98 / CGA009), this protein is Succinate--CoA ligase [ADP-forming] subunit beta.